Reading from the N-terminus, the 417-residue chain is Serine hydroxymethyltransferase (417 aa).

(6S)-5,6,7,8-tetrahydrofolate-binding positions include Leu121 and 125 to 127 (GHL). An N6-(pyridoxal phosphate)lysine modification is found at Lys229. 355-357 (SPF) is a (6S)-5,6,7,8-tetrahydrofolate binding site.

This sequence belongs to the SHMT family. As to quaternary structure, homodimer. The cofactor is pyridoxal 5'-phosphate.

It is found in the cytoplasm. It carries out the reaction (6R)-5,10-methylene-5,6,7,8-tetrahydrofolate + glycine + H2O = (6S)-5,6,7,8-tetrahydrofolate + L-serine. The protein operates within one-carbon metabolism; tetrahydrofolate interconversion. It participates in amino-acid biosynthesis; glycine biosynthesis; glycine from L-serine: step 1/1. In terms of biological role, catalyzes the reversible interconversion of serine and glycine with tetrahydrofolate (THF) serving as the one-carbon carrier. This reaction serves as the major source of one-carbon groups required for the biosynthesis of purines, thymidylate, methionine, and other important biomolecules. Also exhibits THF-independent aldolase activity toward beta-hydroxyamino acids, producing glycine and aldehydes, via a retro-aldol mechanism. This chain is Serine hydroxymethyltransferase, found in Xylella fastidiosa (strain M12).